The sequence spans 150 residues: uncharacterized protein (150 aa).

The Flavodoxin-like domain maps to 3–145; it reads VAILSGSVYG…DAEPWLAEFA (143 aa).

The protein belongs to the flavodoxin family. MioC subfamily. It depends on FMN as a cofactor.

Probable electron transporter. This is an uncharacterized protein from Pseudomonas aeruginosa (strain ATCC 15692 / DSM 22644 / CIP 104116 / JCM 14847 / LMG 12228 / 1C / PRS 101 / PAO1).